Consider the following 475-residue polypeptide: Aspartyl/glutamyl-tRNA(Asn/Gln) amidotransferase subunit B (475 aa).

This sequence belongs to the GatB/GatE family. GatB subfamily. Heterotrimer of A, B and C subunits.

It catalyses the reaction L-glutamyl-tRNA(Gln) + L-glutamine + ATP + H2O = L-glutaminyl-tRNA(Gln) + L-glutamate + ADP + phosphate + H(+). The catalysed reaction is L-aspartyl-tRNA(Asn) + L-glutamine + ATP + H2O = L-asparaginyl-tRNA(Asn) + L-glutamate + ADP + phosphate + 2 H(+). In terms of biological role, allows the formation of correctly charged Asn-tRNA(Asn) or Gln-tRNA(Gln) through the transamidation of misacylated Asp-tRNA(Asn) or Glu-tRNA(Gln) in organisms which lack either or both of asparaginyl-tRNA or glutaminyl-tRNA synthetases. The reaction takes place in the presence of glutamine and ATP through an activated phospho-Asp-tRNA(Asn) or phospho-Glu-tRNA(Gln). The polypeptide is Aspartyl/glutamyl-tRNA(Asn/Gln) amidotransferase subunit B (Bacillus mycoides (strain KBAB4) (Bacillus weihenstephanensis)).